The following is a 288-amino-acid chain: Bifunctional protein FolD (288 aa).

NADP(+)-binding positions include 166–168 and isoleucine 232; that span reads GAS.

This sequence belongs to the tetrahydrofolate dehydrogenase/cyclohydrolase family. Homodimer.

It carries out the reaction (6R)-5,10-methylene-5,6,7,8-tetrahydrofolate + NADP(+) = (6R)-5,10-methenyltetrahydrofolate + NADPH. The enzyme catalyses (6R)-5,10-methenyltetrahydrofolate + H2O = (6R)-10-formyltetrahydrofolate + H(+). It participates in one-carbon metabolism; tetrahydrofolate interconversion. Catalyzes the oxidation of 5,10-methylenetetrahydrofolate to 5,10-methenyltetrahydrofolate and then the hydrolysis of 5,10-methenyltetrahydrofolate to 10-formyltetrahydrofolate. This Erwinia tasmaniensis (strain DSM 17950 / CFBP 7177 / CIP 109463 / NCPPB 4357 / Et1/99) protein is Bifunctional protein FolD.